The chain runs to 124 residues: UPF0102 protein Noca_3248 (124 aa).

It belongs to the UPF0102 family.

This chain is UPF0102 protein Noca_3248, found in Nocardioides sp. (strain ATCC BAA-499 / JS614).